We begin with the raw amino-acid sequence, 376 residues long: Mitogen-activated protein kinase 6 (376 aa).

The Protein kinase domain occupies 43-329 (APPIRPIGRG…VDEALHHPYL (287 aa)). Residues 49-57 (IGRGAYGIV) and lysine 72 each bind ATP. The active-site Proton acceptor is aspartate 169. Threonine 201 is subject to Phosphothreonine. The TXY signature appears at 201–203 (TEY). Tyrosine 203 carries the phosphotyrosine modification.

This sequence belongs to the protein kinase superfamily. CMGC Ser/Thr protein kinase family. MAP kinase subfamily. Post-translationally, dually phosphorylated on Thr-201 and Tyr-203, which activates the enzyme.

It carries out the reaction L-seryl-[protein] + ATP = O-phospho-L-seryl-[protein] + ADP + H(+). The catalysed reaction is L-threonyl-[protein] + ATP = O-phospho-L-threonyl-[protein] + ADP + H(+). Its activity is regulated as follows. Activated by threonine and tyrosine phosphorylation. In Oryza sativa subsp. japonica (Rice), this protein is Mitogen-activated protein kinase 6 (MPK6).